Consider the following 452-residue polypeptide: Tubulin beta-2 chain (452 aa).

Positions 11, 74, 143, 147, 148, 149, 209, and 231 each coordinate GTP. Mg(2+) is bound at residue Glu-74. The interval 431–452 is disordered; that stretch reads QEATADDEAEFEEEGEVEGEYD. Residues 434–452 show a composition bias toward acidic residues; sequence TADDEAEFEEEGEVEGEYD.

This sequence belongs to the tubulin family. As to quaternary structure, dimer of alpha and beta chains. A typical microtubule is a hollow water-filled tube with an outer diameter of 25 nm and an inner diameter of 15 nM. Alpha-beta heterodimers associate head-to-tail to form protofilaments running lengthwise along the microtubule wall with the beta-tubulin subunit facing the microtubule plus end conferring a structural polarity. Microtubules usually have 13 protofilaments but different protofilament numbers can be found in some organisms and specialized cells. Mg(2+) serves as cofactor.

The protein resides in the cytoplasm. Its subcellular location is the cytoskeleton. Tubulin is the major constituent of microtubules, a cylinder consisting of laterally associated linear protofilaments composed of alpha- and beta-tubulin heterodimers. Microtubules grow by the addition of GTP-tubulin dimers to the microtubule end, where a stabilizing cap forms. Below the cap, tubulin dimers are in GDP-bound state, owing to GTPase activity of alpha-tubulin. This Homarus americanus (American lobster) protein is Tubulin beta-2 chain.